The chain runs to 212 residues: 3-isopropylmalate dehydratase small subunit (212 aa).

Belongs to the LeuD family. LeuD type 1 subfamily. In terms of assembly, heterodimer of LeuC and LeuD.

The catalysed reaction is (2R,3S)-3-isopropylmalate = (2S)-2-isopropylmalate. It functions in the pathway amino-acid biosynthesis; L-leucine biosynthesis; L-leucine from 3-methyl-2-oxobutanoate: step 2/4. Functionally, catalyzes the isomerization between 2-isopropylmalate and 3-isopropylmalate, via the formation of 2-isopropylmaleate. In Thioalkalivibrio sulfidiphilus (strain HL-EbGR7), this protein is 3-isopropylmalate dehydratase small subunit.